A 212-amino-acid polypeptide reads, in one-letter code: Riboflavin kinase (212 aa).

Residues 1-87 form an H-T-H motif-like region; it reads MKKSNLDLLI…HEELSDALYR (87 aa). The segment at 88-212 is riboflavin kinase; it reads GIIIGEVVSG…DGDRIRIKTL (125 aa). 97 to 102 is a CDP binding site; that stretch reads GIGEGA. The Mg(2+) site is built by Thr-124 and Asn-126. 2 residues coordinate FMN: Thr-180 and Glu-188. 193–196 lines the CDP pocket; that stretch reads VNLR.

It belongs to the archaeal riboflavin kinase family. It depends on Mg(2+) as a cofactor.

The enzyme catalyses riboflavin + CTP = CDP + FMN + H(+). Its pathway is cofactor biosynthesis; FMN biosynthesis; FMN from riboflavin (CTP route): step 1/1. In terms of biological role, catalyzes the CTP-dependent phosphorylation of riboflavin (vitamin B2) to form flavin mononucleotide (FMN). The protein is Riboflavin kinase (ribK) of Pyrococcus furiosus (strain ATCC 43587 / DSM 3638 / JCM 8422 / Vc1).